A 338-amino-acid polypeptide reads, in one-letter code: Ketol-acid reductoisomerase (NADP(+)) (338 aa).

In terms of domain architecture, KARI N-terminal Rossmann spans 1–181 (MRVFYDKDCD…GGGRTGIIET (181 aa)). Residues 24 to 27 (YGSQ), R47, S50, T52, and 82 to 85 (DEFQ) each bind NADP(+). H107 is an active-site residue. An NADP(+)-binding site is contributed by G133. Positions 182–327 (TFKDETETDL…EKLRAMMPWI (146 aa)) constitute a KARI C-terminal knotted domain. Mg(2+) is bound by residues D190, E194, E226, and E230. A substrate-binding site is contributed by S251.

This sequence belongs to the ketol-acid reductoisomerase family. Requires Mg(2+) as cofactor.

It catalyses the reaction (2R)-2,3-dihydroxy-3-methylbutanoate + NADP(+) = (2S)-2-acetolactate + NADPH + H(+). The catalysed reaction is (2R,3R)-2,3-dihydroxy-3-methylpentanoate + NADP(+) = (S)-2-ethyl-2-hydroxy-3-oxobutanoate + NADPH + H(+). It functions in the pathway amino-acid biosynthesis; L-isoleucine biosynthesis; L-isoleucine from 2-oxobutanoate: step 2/4. The protein operates within amino-acid biosynthesis; L-valine biosynthesis; L-valine from pyruvate: step 2/4. In terms of biological role, involved in the biosynthesis of branched-chain amino acids (BCAA). Catalyzes an alkyl-migration followed by a ketol-acid reduction of (S)-2-acetolactate (S2AL) to yield (R)-2,3-dihydroxy-isovalerate. In the isomerase reaction, S2AL is rearranged via a Mg-dependent methyl migration to produce 3-hydroxy-3-methyl-2-ketobutyrate (HMKB). In the reductase reaction, this 2-ketoacid undergoes a metal-dependent reduction by NADPH to yield (R)-2,3-dihydroxy-isovalerate. This chain is Ketol-acid reductoisomerase (NADP(+)), found in Pseudomonas paraeruginosa (strain DSM 24068 / PA7) (Pseudomonas aeruginosa (strain PA7)).